The chain runs to 61 residues: Small ribosomal subunit protein uS14B (61 aa).

Residues C24, C27, C40, and C43 each coordinate Zn(2+).

This sequence belongs to the universal ribosomal protein uS14 family. Zinc-binding uS14 subfamily. In terms of assembly, part of the 30S ribosomal subunit. Contacts proteins S3 and S10. Zn(2+) is required as a cofactor.

Functionally, binds 16S rRNA, required for the assembly of 30S particles and may also be responsible for determining the conformation of the 16S rRNA at the A site. This is Small ribosomal subunit protein uS14B from Saccharopolyspora erythraea (strain ATCC 11635 / DSM 40517 / JCM 4748 / NBRC 13426 / NCIMB 8594 / NRRL 2338).